We begin with the raw amino-acid sequence, 288 residues long: Phosphatidylserine decarboxylase proenzyme (288 aa).

Residues Asp-91, His-148, and Ser-254 each act as charge relay system; for autoendoproteolytic cleavage activity in the active site. Ser-254 (schiff-base intermediate with substrate; via pyruvic acid; for decarboxylase activity) is an active-site residue. A Pyruvic acid (Ser); by autocatalysis modification is found at Ser-254.

Belongs to the phosphatidylserine decarboxylase family. PSD-B subfamily. Prokaryotic type I sub-subfamily. Heterodimer of a large membrane-associated beta subunit and a small pyruvoyl-containing alpha subunit. The cofactor is pyruvate. Post-translationally, is synthesized initially as an inactive proenzyme. Formation of the active enzyme involves a self-maturation process in which the active site pyruvoyl group is generated from an internal serine residue via an autocatalytic post-translational modification. Two non-identical subunits are generated from the proenzyme in this reaction, and the pyruvate is formed at the N-terminus of the alpha chain, which is derived from the carboxyl end of the proenzyme. The autoendoproteolytic cleavage occurs by a canonical serine protease mechanism, in which the side chain hydroxyl group of the serine supplies its oxygen atom to form the C-terminus of the beta chain, while the remainder of the serine residue undergoes an oxidative deamination to produce ammonia and the pyruvoyl prosthetic group on the alpha chain. During this reaction, the Ser that is part of the protease active site of the proenzyme becomes the pyruvoyl prosthetic group, which constitutes an essential element of the active site of the mature decarboxylase.

It is found in the cell membrane. It carries out the reaction a 1,2-diacyl-sn-glycero-3-phospho-L-serine + H(+) = a 1,2-diacyl-sn-glycero-3-phosphoethanolamine + CO2. It participates in phospholipid metabolism; phosphatidylethanolamine biosynthesis; phosphatidylethanolamine from CDP-diacylglycerol: step 2/2. Its function is as follows. Catalyzes the formation of phosphatidylethanolamine (PtdEtn) from phosphatidylserine (PtdSer). In Pseudoalteromonas translucida (strain TAC 125), this protein is Phosphatidylserine decarboxylase proenzyme.